We begin with the raw amino-acid sequence, 208 residues long: MKIVEVKHPLVKHKLGLMREGDISTKRFRELATEVASLLTYEATSDFETEKVTIEGWNGPVQVDQIKGKKVTVVPILRAGLGMMDGVLEHIPSARISVVGIYRDEETLEPVPYFNKLATNIEERIAMVVDPMLAIGGSMIATIDLLKEKGCNQIKVLVLVAAPEGIAALEKAHPDVELYTAAIDEKLNDKGYIVPGLGDAGDKIFGTK.

Residues arginine 78, arginine 103, and 130–138 contribute to the 5-phospho-alpha-D-ribose 1-diphosphate site; that span reads DPMLAIGGS. Uracil is bound by residues isoleucine 193 and 198–200; that span reads GDA. 5-phospho-alpha-D-ribose 1-diphosphate is bound at residue aspartate 199.

The protein belongs to the UPRTase family. Requires Mg(2+) as cofactor.

It carries out the reaction UMP + diphosphate = 5-phospho-alpha-D-ribose 1-diphosphate + uracil. Its pathway is pyrimidine metabolism; UMP biosynthesis via salvage pathway; UMP from uracil: step 1/1. Its activity is regulated as follows. Allosterically activated by GTP. Catalyzes the conversion of uracil and 5-phospho-alpha-D-ribose 1-diphosphate (PRPP) to UMP and diphosphate. The polypeptide is Uracil phosphoribosyltransferase (Vibrio cholerae serotype O1 (strain ATCC 39315 / El Tor Inaba N16961)).